A 280-amino-acid chain; its full sequence is Late embryogenesis abundant protein M17 (280 aa).

Positions 1–22 are cleaved as a signal peptide; sequence MGNLKSLVLLALLFSFSVAVFA. Asparagine 23 carries an N-linked (GlcNAc...) asparagine glycan. Tandem repeats lie at residues 76–97 and 131–152. The segment at 76–262 is 4 X 22 AA repeats, Cys-rich; the sequence is GGCRWGCCGG…RGRCRYCCRS (187 aa). The interval 163–184 is disordered; the sequence is VEPNDVEPQQGGRGGGGGGGGG. Residues 173-184 show a composition bias toward gly residues; that stretch reads GGRGGGGGGGGG. Repeat 3 spans residues 186–207; the sequence is GGCRWGCCGGWWRGRCRYCCRS. The disordered stretch occupies residues 218–239; sequence VEPNDVEPQQGGRGGGGGGGGG. Residues 228 to 239 show a composition bias toward gly residues; that stretch reads GGRGGGGGGGGG. Residues 241–262 form repeat 4; the sequence is GGCRWGCCGGWWRGRCRYCCRS.

May be involved in the acquisition of desiccation tolerance during late phase of embryogenesis. This Arabidopsis thaliana (Mouse-ear cress) protein is Late embryogenesis abundant protein M17.